The chain runs to 1391 residues: DNA-directed RNA polymerase subunit beta (1391 aa).

It belongs to the RNA polymerase beta chain family. In terms of assembly, the RNAP catalytic core consists of 2 alpha, 1 beta, 1 beta' and 1 omega subunit. When a sigma factor is associated with the core the holoenzyme is formed, which can initiate transcription.

The catalysed reaction is RNA(n) + a ribonucleoside 5'-triphosphate = RNA(n+1) + diphosphate. In terms of biological role, DNA-dependent RNA polymerase catalyzes the transcription of DNA into RNA using the four ribonucleoside triphosphates as substrates. This Paramagnetospirillum magneticum (strain ATCC 700264 / AMB-1) (Magnetospirillum magneticum) protein is DNA-directed RNA polymerase subunit beta.